Here is a 369-residue protein sequence, read N- to C-terminus: Protein DUF642 L-GALACTONO-1,4-LACTONE-RESPONSIVE GENE 2 (369 aa).

An N-terminal signal peptide occupies residues 1 to 19; the sequence is MEGVTVVSFFLLFIATAMA. Residue N125 is glycosylated (N-linked (GlcNAc...) asparagine).

Expressed in roots, seedlings and leaves.

It is found in the secreted. The protein resides in the cell wall. In terms of biological role, involved in the regulation of testa rupture during seed germination. Required during roots and rosettes development. This Arabidopsis thaliana (Mouse-ear cress) protein is Protein DUF642 L-GALACTONO-1,4-LACTONE-RESPONSIVE GENE 2.